We begin with the raw amino-acid sequence, 258 residues long: Large ribosomal subunit protein bL28m (258 aa).

A mitochondrion-targeting transit peptide spans 1–21; it reads MQKIFRPFQLTRGFTSSVKNF.

This sequence belongs to the bacterial ribosomal protein bL28 family. Component of the mitochondrial large ribosomal subunit (mt-LSU). Mature yeast 74S mitochondrial ribosomes consist of a small (37S) and a large (54S) subunit. The 37S small subunit contains a 15S ribosomal RNA (15S mt-rRNA) and 34 different proteins. The 54S large subunit contains a 21S rRNA (21S mt-rRNA) and 46 different proteins.

It localises to the mitochondrion. Component of the mitochondrial ribosome (mitoribosome), a dedicated translation machinery responsible for the synthesis of mitochondrial genome-encoded proteins, including at least some of the essential transmembrane subunits of the mitochondrial respiratory chain. The mitoribosomes are attached to the mitochondrial inner membrane and translation products are cotranslationally integrated into the membrane. The sequence is that of Large ribosomal subunit protein bL28m (MRPL24) from Saccharomyces cerevisiae (strain ATCC 204508 / S288c) (Baker's yeast).